The following is a 249-amino-acid chain: Isoprenyl transferase (249 aa).

Asp29 is a catalytic residue. A Mg(2+)-binding site is contributed by Asp29. Residues 30-33 (GNGR), Trp34, Arg42, His46, and 74-76 (STE) each bind substrate. Asn77 (proton acceptor) is an active-site residue. Residues Trp78, Arg80, Arg197, and 203-205 (RLS) each bind substrate. Residue Glu216 coordinates Mg(2+).

The protein belongs to the UPP synthase family. As to quaternary structure, homodimer. It depends on Mg(2+) as a cofactor.

Functionally, catalyzes the condensation of isopentenyl diphosphate (IPP) with allylic pyrophosphates generating different type of terpenoids. The polypeptide is Isoprenyl transferase (Trichormus variabilis (strain ATCC 29413 / PCC 7937) (Anabaena variabilis)).